A 79-amino-acid polypeptide reads, in one-letter code: Suppressor of tumorigenicity 20 protein (79 aa).

In terms of tissue distribution, expressed in leukocytes, lung, spleen, liver, heart, kidney, muscle and uterine cervix. Down-regulated in cervical cancer.

In terms of biological role, may act as a tumor suppressor. Promotes apoptosis of cancer cells. The chain is Suppressor of tumorigenicity 20 protein (ST20) from Homo sapiens (Human).